A 461-amino-acid polypeptide reads, in one-letter code: Glycolipid 2-alpha-mannosyltransferase 2 (461 aa).

The Cytoplasmic portion of the chain corresponds to 1-12 (MKPSIFYSSRQP). Residues 13-35 (YLKYLAIILTTITIYVLTHSSYS) form a helical; Signal-anchor for type II membrane protein membrane-spanning segment. Polar residues predominate over residues 35–52 (SADPNINDVTTKPISETV). Residues 35 to 138 (SADPNINDVT…SSSKDPVKPE (104 aa)) form a disordered region. Residues 36–461 (ADPNINDVTT…QKPKEWEKYQ (426 aa)) are Lumenal-facing. 2 stretches are compositionally biased toward low complexity: residues 61-70 (SSPEQQQQQP) and 106-116 (PKSSSSSPQQQ). Basic and acidic residues predominate over residues 117–126 (EKQDTKKESE). The Nucleophile role is filled by Glu349.

It belongs to the glycosyltransferase 15 family.

Its subcellular location is the golgi apparatus membrane. Functionally, involved in O-glycosylation of cell wall and secreted proteins. Transfers an alpha-D-mannosyl residue from GDP-mannose into lipid-linked oligosaccharide, forming an alpha-(1-&gt;2)-D-mannosyl-D-mannose linkage. Mainly responsible for the addition of the third mannose residue in an O-linked mannose pentamer. Can also substitute for MNT1 by adding the second mannose residue. Important for adherence to host surfaces and for virulence. The chain is Glycolipid 2-alpha-mannosyltransferase 2 (MNT2) from Candida albicans (strain SC5314 / ATCC MYA-2876) (Yeast).